Here is a 420-residue protein sequence, read N- to C-terminus: Lactosylceramide alpha-2,3-sialyltransferase (420 aa).

The tract at residues methionine 1–leucine 39 is disordered. The Cytoplasmic segment spans residues methionine 1 to aspartate 67. A compositionally biased stretch (basic and acidic residues) spans alanine 9–threonine 18. Over residues alanine 20–alanine 29 the composition is skewed to low complexity. Residues isoleucine 68–asparagine 88 form a helical membrane-spanning segment. The Lumenal portion of the chain corresponds to histidine 89 to phenylalanine 420. The cysteines at positions 197 and 355 are disulfide-linked. The N-linked (GlcNAc...) asparagine glycan is linked to asparagine 238.

It belongs to the glycosyltransferase 29 family.

It is found in the golgi apparatus membrane. It catalyses the reaction a beta-D-Gal-(1-&gt;4)-beta-D-Glc-(1&lt;-&gt;1)-Cer(d18:1(4E)) + CMP-N-acetyl-beta-neuraminate = a ganglioside GM3 (d18:1(4E)) + CMP + H(+). The catalysed reaction is ganglioside GA2 (d18:1(4E)/18:0) + CMP-N-acetyl-beta-neuraminate = ganglioside GM2 (d18:1(4E)/18:0) + CMP + H(+). The enzyme catalyses a beta-D-Gal-(1&lt;-&gt;1')-ceramide + CMP-N-acetyl-beta-neuraminate = N-acetyl-alpha-neuraminosyl-(2-&gt;3)-beta-D-galactosyl-(1&lt;-&gt;1')-ceramide + CMP + H(+). It carries out the reaction ganglioside GA1 (d18:1(4E)/18:0) + CMP-N-acetyl-beta-neuraminate = ganglioside GM1 (d18:1(4E)/18:0) + CMP + H(+). In terms of biological role, transfers the sialyl group (N-acetyl-alpha-neuraminyl or NeuAc) from CMP-NeuAc to the non-reducing terminal galactose (Gal) of glycosphingolipids forming gangliosides (important molecules involved in the regulation of multiple cellular processes, including cell proliferation and differentiation, apoptosis, embryogenesis, development, and oncogenesis). Mainly involved in the biosynthesis of ganglioside GM3 but can also use different glycolipids as substrate acceptors such as D-galactosylceramide (GalCer), asialo-GM2 (GA2) and asialo-GM1 (GA1), although less preferentially than beta-D-Gal-(1-&gt;4)-beta-D-Glc-(1&lt;-&gt;1)-Cer (LacCer). The sequence is that of Lactosylceramide alpha-2,3-sialyltransferase (ST3GAL5) from Bos taurus (Bovine).